A 258-amino-acid polypeptide reads, in one-letter code: Transcriptional repressor AccR (258 aa).

Residues 6 to 61 (TQDRQAKIVELLRDEQFLAIGRLTEHFQISVATARRDLSELHEAGLLRRTHGGAVS) form the HTH deoR-type domain. The H-T-H motif DNA-binding region spans 23 to 42 (LAIGRLTEHFQISVATARRD).

Represses opine catabolism and conjugal transfer of the nopaline Ti plasmid pTiC58. This chain is Transcriptional repressor AccR (accR), found in Agrobacterium fabrum (strain C58 / ATCC 33970) (Agrobacterium tumefaciens (strain C58)).